A 466-amino-acid polypeptide reads, in one-letter code: Adenosylhomocysteinase (466 aa).

Substrate is bound by residues T57, D132, and E192. 193-195 provides a ligand contact to NAD(+); sequence TTT. Substrate contacts are provided by K222 and D226. NAD(+) contacts are provided by residues N227, 256-261, E279, N314, 335-337, and N380; these read GYGDVG and IGH.

Belongs to the adenosylhomocysteinase family. The cofactor is NAD(+).

Its subcellular location is the cytoplasm. The enzyme catalyses S-adenosyl-L-homocysteine + H2O = L-homocysteine + adenosine. Its pathway is amino-acid biosynthesis; L-homocysteine biosynthesis; L-homocysteine from S-adenosyl-L-homocysteine: step 1/1. May play a key role in the regulation of the intracellular concentration of adenosylhomocysteine. The sequence is that of Adenosylhomocysteinase from Mesorhizobium japonicum (strain LMG 29417 / CECT 9101 / MAFF 303099) (Mesorhizobium loti (strain MAFF 303099)).